A 61-amino-acid polypeptide reads, in one-letter code: Small ribosomal subunit protein bS21 (61 aa).

The tract at residues 34 to 61 (KREHYESPSVKRKKKSEAARKRKYKYNK) is disordered. Over residues 43 to 61 (VKRKKKSEAARKRKYKYNK) the composition is skewed to basic residues.

This sequence belongs to the bacterial ribosomal protein bS21 family.

The polypeptide is Small ribosomal subunit protein bS21 (Thermoanaerobacter pseudethanolicus (strain ATCC 33223 / 39E) (Clostridium thermohydrosulfuricum)).